Consider the following 116-residue polypeptide: Phosphoribosyl-AMP cyclohydrolase (116 aa).

Position 78 (Asp-78) interacts with Mg(2+). Cys-79 is a binding site for Zn(2+). Mg(2+)-binding residues include Asp-80 and Asp-82. Positions 95 and 102 each coordinate Zn(2+).

It belongs to the PRA-CH family. In terms of assembly, homodimer. Requires Mg(2+) as cofactor. Zn(2+) is required as a cofactor.

Its subcellular location is the cytoplasm. The enzyme catalyses 1-(5-phospho-beta-D-ribosyl)-5'-AMP + H2O = 1-(5-phospho-beta-D-ribosyl)-5-[(5-phospho-beta-D-ribosylamino)methylideneamino]imidazole-4-carboxamide. It functions in the pathway amino-acid biosynthesis; L-histidine biosynthesis; L-histidine from 5-phospho-alpha-D-ribose 1-diphosphate: step 3/9. Functionally, catalyzes the hydrolysis of the adenine ring of phosphoribosyl-AMP. The protein is Phosphoribosyl-AMP cyclohydrolase of Acidiphilium cryptum (strain JF-5).